We begin with the raw amino-acid sequence, 205 residues long: Small ribosomal subunit protein uS4 (205 aa).

The disordered stretch occupies residues 18-49 (NIWGRPKSPVNKREYGPGQHGQRRKGKLSDFG). The 64-residue stretch at 94–157 (RRLDAIVYRA…KQLALVLEAN (64 aa)) folds into the S4 RNA-binding domain.

This sequence belongs to the universal ribosomal protein uS4 family. As to quaternary structure, part of the 30S ribosomal subunit. Contacts protein S5. The interaction surface between S4 and S5 is involved in control of translational fidelity.

In terms of biological role, one of the primary rRNA binding proteins, it binds directly to 16S rRNA where it nucleates assembly of the body of the 30S subunit. Its function is as follows. With S5 and S12 plays an important role in translational accuracy. This is Small ribosomal subunit protein uS4 from Afipia carboxidovorans (strain ATCC 49405 / DSM 1227 / KCTC 32145 / OM5) (Oligotropha carboxidovorans).